The primary structure comprises 466 residues: UDP-glycosyltransferase 79 (466 aa).

Catalysis depends on His27, which acts as the Proton acceptor. A UDP-alpha-D-glucose-binding site is contributed by His27. Residue Asp120 is the Charge relay of the active site. UDP-alpha-D-glucose contacts are provided by Ser142, Thr291, Phe343, Cys344, His361, Trp364, Asn365, Ser366, Glu369, Asp385, and Gln386. Residues Thr291, Phe343, Cys344, and His361 each coordinate UDP. UDP contacts are provided by Asn365, Ser366, and Glu369.

The protein belongs to the UDP-glycosyltransferase family.

Functionally, involved in the detoxification of the Fusarium mycotoxin deoxynivalenol by the transfer of glucose from UDP-D-glucose to the hydroxyl group at C-3, forming deoxynivalenol-3-O-beta-D-glucoside. The chain is UDP-glycosyltransferase 79 from Oryza sativa subsp. japonica (Rice).